Reading from the N-terminus, the 215-residue chain is Pyridoxine/pyridoxamine 5'-phosphate oxidase (215 aa).

Residues R9–Y12 and K69 each bind substrate. Residues R64 to K69, F79 to S80, K86, and Q108 contribute to the FMN site. Substrate-binding residues include Y126, R130, and S134. FMN contacts are provided by residues Q143–S144 and W188. Residue R194–H196 participates in substrate binding. Position 198 (R198) interacts with FMN.

It belongs to the pyridoxamine 5'-phosphate oxidase family. As to quaternary structure, homodimer. It depends on FMN as a cofactor.

The catalysed reaction is pyridoxamine 5'-phosphate + O2 + H2O = pyridoxal 5'-phosphate + H2O2 + NH4(+). The enzyme catalyses pyridoxine 5'-phosphate + O2 = pyridoxal 5'-phosphate + H2O2. It participates in cofactor metabolism; pyridoxal 5'-phosphate salvage; pyridoxal 5'-phosphate from pyridoxamine 5'-phosphate: step 1/1. The protein operates within cofactor metabolism; pyridoxal 5'-phosphate salvage; pyridoxal 5'-phosphate from pyridoxine 5'-phosphate: step 1/1. In terms of biological role, catalyzes the oxidation of either pyridoxine 5'-phosphate (PNP) or pyridoxamine 5'-phosphate (PMP) into pyridoxal 5'-phosphate (PLP). The chain is Pyridoxine/pyridoxamine 5'-phosphate oxidase from Azotobacter vinelandii (strain DJ / ATCC BAA-1303).